Consider the following 1024-residue polypeptide: Protein translocase subunit SecA (1024 aa).

Residues Gln143, 161–165 (GEGKT), and Asp661 each bind ATP. The tract at residues 970–1024 (HEEAGSVYNAQPDGEPESQASKQQPVVADHSKPGRNDLCPCGSGKKYKNCHGREA) is disordered. 4 residues coordinate Zn(2+): Cys1008, Cys1010, Cys1019, and His1020. The segment covering 1014-1024 (KKYKNCHGREA) has biased composition (basic residues).

This sequence belongs to the SecA family. In terms of assembly, monomer and homodimer. Part of the essential Sec protein translocation apparatus which comprises SecA, SecYEG and auxiliary proteins SecDF. Other proteins may also be involved. It depends on Zn(2+) as a cofactor.

It is found in the cell inner membrane. Its subcellular location is the cytoplasm. It carries out the reaction ATP + H2O + cellular proteinSide 1 = ADP + phosphate + cellular proteinSide 2.. Functionally, part of the Sec protein translocase complex. Interacts with the SecYEG preprotein conducting channel. Has a central role in coupling the hydrolysis of ATP to the transfer of proteins into and across the cell membrane, serving as an ATP-driven molecular motor driving the stepwise translocation of polypeptide chains across the membrane. The polypeptide is Protein translocase subunit SecA (Chlorobium luteolum (strain DSM 273 / BCRC 81028 / 2530) (Pelodictyon luteolum)).